The primary structure comprises 120 residues: GATA transcription factor 23 (120 aa).

The GATA-type zinc-finger motif lies at 22 to 76 (KGTIRCCSECKTTKTPMWRGGPTGPKSLCNACGIRHRKQRRSELLGIHIIRSHKS).

Belongs to the type IV zinc-finger family. Class B subfamily.

The protein localises to the nucleus. In terms of biological role, transcriptional regulator that specifically binds 5'-GATA-3' or 5'-GAT-3' motifs within gene promoters. This is GATA transcription factor 23 (GATA23) from Arabidopsis thaliana (Mouse-ear cress).